The primary structure comprises 406 residues: Acetate kinase (406 aa).

N7 contacts Mg(2+). K14 provides a ligand contact to ATP. R90 is a binding site for substrate. The active-site Proton donor/acceptor is D147. Residues 207 to 211, 283 to 285, and 331 to 335 contribute to the ATP site; these read HLGNG, DMR, and GVGEN. E385 is a Mg(2+) binding site.

It belongs to the acetokinase family. Homodimer. Requires Mg(2+) as cofactor. The cofactor is Mn(2+).

Its subcellular location is the cytoplasm. It carries out the reaction acetate + ATP = acetyl phosphate + ADP. Its pathway is metabolic intermediate biosynthesis; acetyl-CoA biosynthesis; acetyl-CoA from acetate: step 1/2. Catalyzes the formation of acetyl phosphate from acetate and ATP. Can also catalyze the reverse reaction. The polypeptide is Acetate kinase (Thermosipho melanesiensis (strain DSM 12029 / CIP 104789 / BI429)).